Consider the following 198-residue polypeptide: Ribonuclease HII (198 aa).

An RNase H type-2 domain is found at 9–198; the sequence is ITVAGADEAG…LLPDQLKIDF (190 aa). The a divalent metal cation site is built by Asp15, Glu16, and Asp107.

Belongs to the RNase HII family. Mn(2+) is required as a cofactor. Mg(2+) serves as cofactor.

Its subcellular location is the cytoplasm. It catalyses the reaction Endonucleolytic cleavage to 5'-phosphomonoester.. In terms of biological role, endonuclease that specifically degrades the RNA of RNA-DNA hybrids. This is Ribonuclease HII from Christiangramia forsetii (strain DSM 17595 / CGMCC 1.15422 / KT0803) (Gramella forsetii).